The sequence spans 29 residues: Toxin II.9 (29 aa).

In terms of domain architecture, LCN-type CS-alpha/beta spans 2 to 29 (KDGYLVNKYTGCKVNCYKLGENKFCNRE).

Belongs to the long (4 C-C) scorpion toxin superfamily. Sodium channel inhibitor family. Beta subfamily. As to expression, expressed by the venom gland.

It is found in the secreted. Its function is as follows. Binds to sodium channels (Nav) and shift the voltage of activation toward more negative potentials. This toxin is active on crustaceans. This is Toxin II.9 from Centruroides limpidus (Mexican scorpion).